The sequence spans 215 residues: MRAFTQHQGTVAPMDRSNVDTDMIIPKQFLKSIKRTGFGPNLFDELRYLDEGKPDQDCSNRPLNPDFVLNQDRYKNASVLLARTNFGCGSSREHAPWALDDFGFRVIIAPSFADIFYNNCFKNGLLPIVLDEKVVDRLFRETEENEGYQLTVDLEAKTVTTPGGESFSFEVDDFRRHCLLNGLDDIGVTLEDADTIRAYEESRRKTAPWLFNTGN.

This sequence belongs to the LeuD family. LeuD type 1 subfamily. Heterodimer of LeuC and LeuD.

The catalysed reaction is (2R,3S)-3-isopropylmalate = (2S)-2-isopropylmalate. Its pathway is amino-acid biosynthesis; L-leucine biosynthesis; L-leucine from 3-methyl-2-oxobutanoate: step 2/4. Its function is as follows. Catalyzes the isomerization between 2-isopropylmalate and 3-isopropylmalate, via the formation of 2-isopropylmaleate. The sequence is that of 3-isopropylmalate dehydratase small subunit from Marinobacter nauticus (strain ATCC 700491 / DSM 11845 / VT8) (Marinobacter aquaeolei).